Reading from the N-terminus, the 283-residue chain is Thymidylate synthase (283 aa).

Arg22 provides a ligand contact to dUMP. Cys160 functions as the Nucleophile in the catalytic mechanism. Residues 180 to 183 (RSCD), Asn191, and 221 to 223 (HIY) each bind dUMP. Asp183 is a binding site for (6R)-5,10-methylene-5,6,7,8-tetrahydrofolate. Ser282 provides a ligand contact to (6R)-5,10-methylene-5,6,7,8-tetrahydrofolate.

It belongs to the thymidylate synthase family. Bacterial-type ThyA subfamily. Homodimer.

The protein resides in the cytoplasm. The enzyme catalyses dUMP + (6R)-5,10-methylene-5,6,7,8-tetrahydrofolate = 7,8-dihydrofolate + dTMP. The protein operates within pyrimidine metabolism; dTTP biosynthesis. Its function is as follows. Catalyzes the reductive methylation of 2'-deoxyuridine-5'-monophosphate (dUMP) to 2'-deoxythymidine-5'-monophosphate (dTMP) while utilizing 5,10-methylenetetrahydrofolate (mTHF) as the methyl donor and reductant in the reaction, yielding dihydrofolate (DHF) as a by-product. This enzymatic reaction provides an intracellular de novo source of dTMP, an essential precursor for DNA biosynthesis. This Photobacterium profundum (strain SS9) protein is Thymidylate synthase.